We begin with the raw amino-acid sequence, 341 residues long: tRNA N6-adenosine threonylcarbamoyltransferase (341 aa).

Fe cation is bound by residues His-118 and His-122. Substrate contacts are provided by residues Leu-141–Gly-145, Asp-174, Gly-187, and Asn-281. Asp-309 is a binding site for Fe cation.

The protein belongs to the KAE1 / TsaD family. Fe(2+) is required as a cofactor.

The protein localises to the cytoplasm. The enzyme catalyses L-threonylcarbamoyladenylate + adenosine(37) in tRNA = N(6)-L-threonylcarbamoyladenosine(37) in tRNA + AMP + H(+). In terms of biological role, required for the formation of a threonylcarbamoyl group on adenosine at position 37 (t(6)A37) in tRNAs that read codons beginning with adenine. Is involved in the transfer of the threonylcarbamoyl moiety of threonylcarbamoyl-AMP (TC-AMP) to the N6 group of A37, together with TsaE and TsaB. TsaD likely plays a direct catalytic role in this reaction. The sequence is that of tRNA N6-adenosine threonylcarbamoyltransferase from Desulfitobacterium hafniense (strain Y51).